The sequence spans 444 residues: CCA-adding enzyme (444 aa).

Serine 57 and arginine 60 together coordinate ATP. Positions 57 and 60 each coordinate CTP. Positions 69, 71, and 124 each coordinate Mg(2+). Positions 147, 168, and 177 each coordinate ATP. CTP is bound by residues histidine 147, lysine 168, and tyrosine 177.

Belongs to the tRNA nucleotidyltransferase/poly(A) polymerase family. Archaeal CCA-adding enzyme subfamily. As to quaternary structure, homodimer. The cofactor is Mg(2+).

It carries out the reaction a tRNA precursor + 2 CTP + ATP = a tRNA with a 3' CCA end + 3 diphosphate. The catalysed reaction is a tRNA with a 3' CCA end + 2 CTP + ATP = a tRNA with a 3' CCACCA end + 3 diphosphate. In terms of biological role, catalyzes the addition and repair of the essential 3'-terminal CCA sequence in tRNAs without using a nucleic acid template. Adds these three nucleotides in the order of C, C, and A to the tRNA nucleotide-73, using CTP and ATP as substrates and producing inorganic pyrophosphate. tRNA 3'-terminal CCA addition is required both for tRNA processing and repair. Also involved in tRNA surveillance by mediating tandem CCA addition to generate a CCACCA at the 3' terminus of unstable tRNAs. While stable tRNAs receive only 3'-terminal CCA, unstable tRNAs are marked with CCACCA and rapidly degraded. The sequence is that of CCA-adding enzyme from Methanococcus maripaludis (strain DSM 14266 / JCM 13030 / NBRC 101832 / S2 / LL).